Reading from the N-terminus, the 370-residue chain is Protein maelstrom 2 (370 aa).

The segment at residues 2–68 (AQNKPNAFMA…VLERESKTER (67 aa)) is a DNA-binding region (HMG box).

Belongs to the maelstrom family.

It localises to the cytoplasm. The protein resides in the nucleus. Its function is as follows. Involved both in the piRNA and miRNA metabolic processes. As a component of the meiotic nuage, plays a central role during oogenesis by repressing transposable elements and preventing their mobilization, which is essential for the germline integrity. Repression of transposable elements is mediated via the piRNA metabolic process, which mediates the repression of transposable elements during meiosis by forming complexes composed of piRNAs and Piwi proteins and governs the repression of transposons. As a nuclear component, it is required for proper differentiation in the germline stem cell (GSC) lineage by repressing microRNA-7 (miR-7), thereby acting as an indirect regulator of bag-of-marbles (Bam). Acts by binding to the promoter of miR-7 gene and repressing its expression; miR-7 repression alleviates the Bam repression by miR-7, thereby allowing differentiation in the germline stem cell (GSC) lineage. This is Protein maelstrom 2 (mael2) from Drosophila pseudoobscura pseudoobscura (Fruit fly).